The chain runs to 132 residues: MGKPAAERRLSENEAQAFARLIRSSPRKLNLVAQLIRGKAAGEALALLTFSKRRVAGEVKKVLQSAIANAENNHQLDVDRLYVSHATVGRALVMKRFHARARGRGARVEKWFSNLTVVVRERADEPVQEAAE.

This sequence belongs to the universal ribosomal protein uL22 family. As to quaternary structure, part of the 50S ribosomal subunit.

In terms of biological role, this protein binds specifically to 23S rRNA; its binding is stimulated by other ribosomal proteins, e.g. L4, L17, and L20. It is important during the early stages of 50S assembly. It makes multiple contacts with different domains of the 23S rRNA in the assembled 50S subunit and ribosome. The globular domain of the protein is located near the polypeptide exit tunnel on the outside of the subunit, while an extended beta-hairpin is found that lines the wall of the exit tunnel in the center of the 70S ribosome. This Rhodospirillum centenum (strain ATCC 51521 / SW) protein is Large ribosomal subunit protein uL22.